The following is a 365-amino-acid chain: Pre-mRNA-splicing factor srp2 (365 aa).

2 consecutive RRM domains span residues 6-69 (LFVG…RIVV) and 100-166 (LIVE…AVTL). Residues 166–365 (LREDPDAANE…SAEGQVAAEW (200 aa)) are disordered. Over residues 184–194 (FRSRSPPARRR) the composition is skewed to basic residues. Phosphoserine is present on residues serine 186, serine 188, serine 276, serine 294, serine 296, serine 298, and serine 308. Residues 195-307 (YRDDYRRGGD…SPRRDREENR (113 aa)) are compositionally biased toward basic and acidic residues. Over residues 316–332 (SYSAAPEASMESSAPTE) the composition is skewed to low complexity. Residues 341 to 353 (EEQQPLQNHSDVG) show a composition bias toward polar residues.

Belongs to the splicing factor SR family. In terms of processing, extensively phosphorylated on serine residues in the RS domain.

The protein resides in the nucleus. Has a role in pre-mRNA splicing where it is involved in spliceosome assembly. This chain is Pre-mRNA-splicing factor srp2 (srp2), found in Schizosaccharomyces pombe (strain 972 / ATCC 24843) (Fission yeast).